A 302-amino-acid polypeptide reads, in one-letter code: Sulfotransferase 1C4 (302 aa).

Position 55-60 (55-60 (KAGTTW)) interacts with 3'-phosphoadenylyl sulfate. 113–115 (KTH) provides a ligand contact to substrate. His-115 functions as the Proton acceptor in the catalytic mechanism. Residues Arg-137, Ser-145, Tyr-200, 234–239 (TSFDVM), and 262–266 (FMRKG) contribute to the 3'-phosphoadenylyl sulfate site.

Belongs to the sulfotransferase 1 family. In terms of tissue distribution, expressed in liver, kidney and jejunum.

It is found in the cytoplasm. The protein resides in the cytosol. It carries out the reaction a phenol + 3'-phosphoadenylyl sulfate = an aryl sulfate + adenosine 3',5'-bisphosphate + H(+). It catalyses the reaction 17beta-estradiol + 3'-phosphoadenylyl sulfate = 17beta-estradiol 3-sulfate + adenosine 3',5'-bisphosphate + H(+). The catalysed reaction is bisphenol A + 3'-phosphoadenylyl sulfate = bisphenyl A sulfate + adenosine 3',5'-bisphosphate + H(+). Its function is as follows. Sulfotransferase that utilizes 3'-phospho-5'-adenylyl sulfate (PAPS) as sulfonate donor to catalyze the sulfate conjugation of phenolic compounds and estrogen (E2). Can also sulfonate estrogenic compounds, however, the dietary flavonoids (phytoestrogen) and environmental estrogens, like bisphenol A are better substrates than 17beta-estradiol (E2). The sequence is that of Sulfotransferase 1C4 (SULT1C4) from Macaca fascicularis (Crab-eating macaque).